Here is a 164-residue protein sequence, read N- to C-terminus: Protein SprT (164 aa).

Positions 14-156 (QLAESFFKRP…LCRRCRQTLV (143 aa)) constitute a SprT-like domain. Residue His-69 coordinates Zn(2+). Glu-70 is a catalytic residue. His-73 serves as a coordination point for Zn(2+).

The protein belongs to the SprT family. Requires Zn(2+) as cofactor.

It is found in the cytoplasm. This Pseudomonas fluorescens (strain ATCC BAA-477 / NRRL B-23932 / Pf-5) protein is Protein SprT.